A 353-amino-acid polypeptide reads, in one-letter code: Nicotinate-nucleotide--dimethylbenzimidazole phosphoribosyltransferase (353 aa).

Glu319 serves as the catalytic Proton acceptor.

The protein belongs to the CobT family.

The enzyme catalyses 5,6-dimethylbenzimidazole + nicotinate beta-D-ribonucleotide = alpha-ribazole 5'-phosphate + nicotinate + H(+). The protein operates within nucleoside biosynthesis; alpha-ribazole biosynthesis; alpha-ribazole from 5,6-dimethylbenzimidazole: step 1/2. Its function is as follows. Catalyzes the synthesis of alpha-ribazole-5'-phosphate from nicotinate mononucleotide (NAMN) and 5,6-dimethylbenzimidazole (DMB). The polypeptide is Nicotinate-nucleotide--dimethylbenzimidazole phosphoribosyltransferase (Chlorobaculum tepidum (strain ATCC 49652 / DSM 12025 / NBRC 103806 / TLS) (Chlorobium tepidum)).